Reading from the N-terminus, the 1460-residue chain is Venom prothrombin activator omicarin-C non-catalytic subunit (1460 aa).

Positions 1-30 (MGRYSVSPVPKCLLLMFLGWSGLKYYQVNA) are cleaved as a signal peptide. 4 Plastocyanin-like domains span residues 32–196 (QLRE…LLIC), 206–330 (AQKF…LNIK), 351–529 (MNWE…LLVC), and 539–685 (VQNK…FLDA). F5/8 type A domains lie at 32 to 330 (QLRE…LNIK) and 350 to 685 (IMNW…FLDA). Ca(2+) contacts are provided by K124, E139, D142, and D143. N156 is a glycosylation site (N-linked (GlcNAc...) asparagine). A disulfide bond links C170 and C196. N-linked (GlcNAc...) asparagine glycans are attached at residues N242, N300, N385, N406, and N471. The cysteines at positions 251 and 332 are disulfide-linked. C503 and C529 are oxidised to a cystine. N557 carries an N-linked (GlcNAc...) asparagine glycan. Intrachain disulfides connect C672–C1031, C965–C991, C1147–C1298, and C1303–C1457. The segment at 693-817 (GNEEEEEDDG…SDDIAGRYLR (125 aa)) is b. The tract at residues 740–760 (LLDDEDNPEQSRSEQTEDDEE) is disordered. The propeptide at 772–817 (SFKGSVAEEELKHTALALEEDAHASDPRIDSNSARNSDDIAGRYLR) is activation peptide (connecting region). Plastocyanin-like domains follow at residues 823–991 (NKRR…ILIC) and 1000–1143 (NRTI…FTVI). The region spanning 823–1143 (NKRRYYIAAE…RGMQALFTVI (321 aa)) is the F5/8 type A 3 domain. Ca(2+) is bound by residues K919, F934, D937, and D938. The N-linked (GlcNAc...) asparagine glycan is linked to N943. Residues N1000, N1180, and N1397 are each glycosylated (N-linked (GlcNAc...) asparagine). 2 consecutive F5/8 type C domains span residues 1147-1298 (CKLP…LLGC) and 1303-1457 (CSVP…LFGC).

This sequence belongs to the multicopper oxidase family. As to quaternary structure, heterodimer of a light and a heavy chains; non-disulfide-linked. The interaction between the two chains is calcium-dependent. Found in its active form associated with omicarin-C catalytic subunit (AC Q58L95). Post-translationally, in physiological conditions, blood coagulation factor V and factor Va are inactivated by activated protein C (APC) through proteolytic degradation of the heavy chain. However, omicarin-C non-catalytic subunit (factor V-like protein) retains its full activity even at high concentration of APC. This has two explanations: this protein has only one of the three cleavage sites present in factor V that are targeted by the APC for inactivation, and the binding with the catalytic subunit protect the cleavage site from inactivation. Expressed by the venom gland.

The protein resides in the secreted. In terms of biological role, snake prothrombin activator that attacks the hemostatic system of prey. This non-catalytic subunit is functionally similar to blood coagulation factor V. It serves as a critical cofactor for the prothrombinase activity of the catalytic subunit, which is similar to the blood coagulation factor X. The complex converts prothrombin to thrombin by sequential cleavage at two positions, Arg-320 followed by Arg-271. Cleavage at Arg-320 produces an active intermediate known as meizothrombin. Meizothrombin is the 'second' substrate for prothrombinase, and it docks in an altered manner to present the second cleavage site (271). Cleavage at Arg-271 releases active thrombin from its pro-fragment. This order of events is reversed if the protease component of prothrombinase is used on its own, suggesting that the 271 site is inherently more accessible to proteolysis. This chain is Venom prothrombin activator omicarin-C non-catalytic subunit, found in Oxyuranus microlepidotus (Inland taipan).